The primary structure comprises 168 residues: Mediator of RNA polymerase II transcription subunit 31 (168 aa).

Residues 113–159 show a composition bias toward acidic residues; sequence EGEDQDVEESEEETVENEQKESEDEEDVVIVEKPEDEQEEQAEEAAE. A disordered region spans residues 113 to 168; sequence EGEDQDVEESEEETVENEQKESEDEEDVVIVEKPEDEQEEQAEEAAEPTDTSLLNT.

This sequence belongs to the Mediator complex subunit 31 family. Component of the Mediator complex.

It localises to the nucleus. Functionally, component of the Mediator complex, a coactivator involved in the regulated transcription of nearly all RNA polymerase II-dependent genes. Mediator functions as a bridge to convey information from gene-specific regulatory proteins to the basal RNA polymerase II transcription machinery. Mediator is recruited to promoters by direct interactions with regulatory proteins and serves as a scaffold for the assembly of a functional preinitiation complex with RNA polymerase II and the general transcription factors. The chain is Mediator of RNA polymerase II transcription subunit 31 (mdt-31) from Caenorhabditis briggsae.